We begin with the raw amino-acid sequence, 3726 residues long: Zinc finger homeobox protein 3 (3726 aa).

Disordered regions lie at residues 1–79 and 95–129; these read MEGC…SKEV and MEHHCPGTHPPPALREESASDTSEEGEEESDVENL. The C2H2-type 1 zinc-finger motif lies at 79–103; the sequence is VSCNECSASFSSLQTYMEHHCPGTH. Acidic residues predominate over residues 116-126; that stretch reads TSEEGEEESDV. The C2H2-type 2 zinc-finger motif lies at 282-305; the sequence is LMCFLCKLSFGYVRSFVTHAVHDH. Residues 417–557 form a disordered region; that stretch reads SVPLGPLASS…GPASTTSNSA (141 aa). At Ser426 the chain carries Phosphoserine. Thr428 bears the Phosphothreonine mark. Residues 431–459 show a composition bias toward basic and acidic residues; sequence SEGKDSGAAEGDKQESGGHQDCFSEKVEP. 2 stretches are compositionally biased toward acidic residues: residues 460-491 and 500-510; these read AEEEEAEEEEEEEEEAEEEEEEEEEEEEEEEE and DLEEELEDSPS. The segment covering 528–557 has biased composition (polar residues); it reads SNPSISNSPLMPNVLQTLSRGPASTTSNSA. Residues Ser535 and Ser573 each carry the phosphoserine modification. The segment at 590 to 621 is disordered; the sequence is DFADESANKDSATAPEPNESTEGDDGGFVPHH. 3 C2H2-type zinc fingers span residues 641 to 664, 672 to 695, and 727 to 751; these read VECPKCDTVLGSSRSLGGHMTMMH, LKCPKCNWHYKYQQTLEAHMKEKH, and FRCEVCNYSTTTKGNLSIHMQSDKH. The C2H2-type 6; atypical zinc finger occupies 805–829; it reads WRCEVCDYETNVARNLRIHMTSEKH. Residues 946 to 969 form a C2H2-type 7; degenerate zinc finger; the sequence is FQCAVCNKFTTDNLDMLGLHMNVE. Residues 985 to 1009 form a C2H2-type 8; atypical zinc finger; that stretch reads YQCKLCRYNTQLKANFQLHCKTDKH. The segment at 1041 to 1065 adopts a C2H2-type 9; atypical zinc-finger fold; the sequence is LKCNACDYYTNSLEKLRLHTVNSRH. The C2H2-type 10; atypical zinc-finger motif lies at 1089–1113; the sequence is YHCVLCNYSTKAKLNLIQHVRSMKH. The tract at residues 1125–1228 is disordered; sequence LQKGLPEEDE…KRPKASEEIK (104 aa). The span at 1149-1159 shows a compositional bias: acidic residues; the sequence is DPEEPVEDAEG. Composition is skewed to polar residues over residues 1175-1191 and 1199-1217; these read GSGSEEGQSKRAASSSQ and SPATTKRTSFPGSSETPLS. The residue at position 1207 (Ser1207) is a Phosphoserine. The C2H2-type 11; atypical zinc finger occupies 1233 to 1256; sequence YQCPYCKYSNADVNRLRVHAMTQH. A C2H2-type 12 zinc finger spans residues 1262–1285; that stretch reads LRCPLCQDMLNNKIHLQLHLTHLH. A disordered region spans residues 1320-1361; sequence DGNSTLEEVGKQPEASEDPGKNILPPASMEHGGDLKPTSADP. 3 C2H2-type zinc fingers span residues 1370 to 1395, 1411 to 1433, and 1439 to 1462; these read FLCWKKGCNQVFKTSATLQTHFNEVH, YRCNQCSLAFKTIEKLQLHSQYH, and TMCCLCQRSFRTFQALKKHLETSH. The disordered stretch occupies residues 1500 to 1539; sequence EEDKEEESDLEDKQSPTGSDSGSVQEDSGSEPKRALPFRK. Residues 1514–1526 are compositionally biased toward polar residues; that stretch reads SPTGSDSGSVQED. The C2H2-type 16 zinc finger occupies 1555–1579; sequence YKCTVCKESFTQKNILLVHYNSVSH. Ser1600 is modified (phosphoserine). The C2H2-type 17 zinc-finger motif lies at 1606–1630; that stretch reads FKCNTCNVAYSQSSTLEIHMRSVLH. 3 disordered regions span residues 1639–1678, 1706–1738, and 1866–1943; these read LEAASGNSNGTGNSGGVSLSSSTPSPVGSSGANNTFTATN, NPISANIASPSEPKEANRKKLADMIASRQQQQQ, and LSQS…PRIA. A compositionally biased stretch (low complexity) spans 1643–1669; it reads SGNSNGTGNSGGVSLSSSTPSPVGSSG. A compositionally biased stretch (basic and acidic residues) spans 1717–1727; sequence EPKEANRKKLA. Residues 1866-1878 are compositionally biased toward low complexity; sequence LSQSHSALLQPSQ. Basic and acidic residues predominate over residues 1879 to 1902; it reads HPEKKNKVVIKEKDKESQREREGP. Residues 1990–2013 form a C2H2-type 18 zinc finger; the sequence is LECDSCGKLFSNILILKSHQEHVH. 2 disordered regions span residues 2037–2089 and 2211–2249; these read YPLR…AQPS and NKDSPYNFSNPPITSLEELKIDSRPPSPEPQKQEYWGSK. The segment covering 2041–2066 has biased composition (pro residues); sequence PQTPEPPPPPPPPPPPPLPTAPPQPA. Positions 2152-2211 form a DNA-binding region, homeobox 1; that stretch reads NKRPRTRITDDQLRVLRQYFDINNSPSEEQIKEMADKSGLPQKVIKHWFRNTLFKERQRN. Over residues 2214-2223 the composition is skewed to polar residues; it reads SPYNFSNPPI. Residues 2249–2308 constitute a DNA-binding region (homeobox 2); that stretch reads KRSSRTRFTDYQLRVLQDFFDANAYPKDDEFEQLSNLLNLPTRVIVVWFQNARQKARKNY. The segment at 2335–2358 adopts a C2H2-type 19; atypical zinc-finger fold; sequence YQCKKCSLVFQRIFDLIKHQKKLC. A Glycyl lysine isopeptide (Lys-Gly) (interchain with G-Cter in SUMO1) cross-link involves residue Lys2356. Disordered stretches follow at residues 2383–2405 and 2429–2529; these read TPTSSSCSTPMPSQAYSTPAPSA and NSKA…PQQL. Positions 2458 to 2478 are enriched in low complexity; sequence QPKPEMQQQLEQLEQKTNAPQ. The span at 2479–2507 shows a compositional bias: pro residues; that stretch reads PKLPQPAAPSLPQPPPQAPPPQCPLPQSS. Residues 2508-2521 show a composition bias toward low complexity; it reads PSPSQLSHLPLKPL. The C2H2-type 20 zinc-finger motif lies at 2539-2561; the sequence is YQCDQCKLAFPSFEHWQEHQQLH. The Nuclear localization signal motif lies at 2624–2626; that stretch reads KRK. The interval 2628 to 2656 is disordered; it reads EEKASASPGENDSGTGGEEPQRDKRLRTT. Ser2634 is modified (phosphoserine). A DNA-binding region (homeobox 3) is located at residues 2650–2709; sequence DKRLRTTITPEQLEILYQKYLLDSNPTRKMLDHIAHEVGLKKRVVQVWFQNTRARERKGQ. Residues 2720-2743 form a C2H2-type 21 zinc finger; that stretch reads RRCPFCRALFKAKTALEAHIRSRH. Over residues 2780 to 2789 the composition is skewed to polar residues; it reads SHLPPSSSDG. A disordered region spans residues 2780–2805; that stretch reads SHLPPSSSDGQGVPLSPVSKTMELSP. A phosphoserine mark is found at Ser2795 and Ser2804. Lys2815 participates in a covalent cross-link: Glycyl lysine isopeptide (Lys-Gly) (interchain with G-Cter in SUMO1); alternate. Lys2815 participates in a covalent cross-link: Glycyl lysine isopeptide (Lys-Gly) (interchain with G-Cter in SUMO2); alternate. Positions 2850-2877 are disordered; it reads AITDTTTGDEGNADNDSATGIATETKSS. Phosphoserine occurs at positions 2900 and 2904. Positions 2920 to 2955 are disordered; it reads VDYSETSSLADPCSPSPGASGSAGKSGDGGDRPGQK. Over residues 2929–2944 the composition is skewed to low complexity; that stretch reads ADPCSPSPGASGSAGK. Positions 2952–3011 form a DNA-binding region, homeobox 4; that stretch reads PGQKRFRTQMTNLQLKVLKSCFNDYRTPTMLECEVLGNDIGLPKRVVQVWFQNARAKEKK. A C2H2-type 22 zinc finger spans residues 3032-3056; that stretch reads TECTLCGIKYSARLSVRDHIFSQQH. Disordered stretches follow at residues 3145-3274 and 3415-3476; these read FTPA…AGTG and QQQQ…SASA. Residues 3147-3156 show a composition bias toward polar residues; that stretch reads PANTALTSPK. Residues 3181–3199 show a composition bias toward low complexity; that stretch reads PSSASLSSPTPAQATMAMA. The span at 3200 to 3221 shows a compositional bias: pro residues; it reads PQPPPQPQQPQPPVQQPPPPPA. Residues 3222–3234 show a composition bias toward low complexity; sequence AQQIPAPQLTPQQ. A compositionally biased stretch (basic and acidic residues) spans 3235–3267; the sequence is QRKDKDGEKGKEKEKAHKGKGEPLPVPKKEKGE. Lys3262 participates in a covalent cross-link: Glycyl lysine isopeptide (Lys-Gly) (interchain with G-Cter in SUMO1). Phosphoserine is present on Ser3434. A compositionally biased stretch (basic and acidic residues) spans 3435-3453; the sequence is PDKDPAKESPKPEEQKNVP. Ser3457 bears the Phosphoserine mark. The C2H2-type 23 zinc-finger motif lies at 3552–3576; the sequence is YHCLACESALCGEEALSQHLESALH. A disordered region spans residues 3588–3726; that stretch reads AKEHPSLLPH…TSVGTDTFRL (139 aa). 2 stretches are compositionally biased toward low complexity: residues 3605-3618 and 3645-3677; these read STASTSQSAAHSND and SRASAAKPPSFPPLSSSSTVTSSSCSTSGVQPS. A Phosphoserine modification is found at Ser3616. Position 3700 is a phosphoserine (Ser3700). Residues 3715–3726 show a composition bias toward polar residues; the sequence is GLTSVGTDTFRL.

As to quaternary structure, interacts with ALKBH4 and PIAS3. Interacts with FNBP3. Interacts with ESR1, RUNX3, TRIM25, SMAD2 and SMAD3. In terms of processing, phosphorylated at Ser-2634 in both embryonic and adult brain. Phosphorylation at Ser-1600, Ser-2795, Ser-2804, Ser-2900, Ser-3434, Ser-3616 and Ser-3700 is restricted to the embryonic brain. Hyperphosphorylation in embryonic brain protects ZFHX3 from calpain/CAPN1-mediated degradation. Post-translationally, ubiquitinated, leading to its proteasomal degradation. Nuclear localization is essential for its sumoylation. As to expression, expressed in suprachiasmatic nucleus (SCN) of the brain (at protein level). Expressed in skeletal muscle. Levels of expression are high in myoblasts but low in differentiated muscle. Expressed in the heart, primarily in the atria.

It is found in the nucleus. It localises to the cytoplasm. In terms of biological role, transcriptional regulator which can act as an activator or a repressor. Inhibits the enhancer element of the AFP gene by binding to its AT-rich core sequence. In concert with SMAD-dependent TGF-beta signaling can repress the transcription of AFP via its interaction with SMAD2/3. Regulates the circadian locomotor rhythms via transcriptional activation of neuropeptidergic genes which are essential for intercellular synchrony and rhythm amplitude in the suprachiasmatic nucleus (SCN) of the brain. Regulator of myoblasts differentiation through the binding to the AT-rich sequence of MYF6 promoter and promoter repression. Down-regulates the MUC5AC promoter in gastric cancer. In association with RUNX3, up-regulates CDKN1A promoter activity following TGF-beta stimulation. This Mus musculus (Mouse) protein is Zinc finger homeobox protein 3 (Zfhx3).